The chain runs to 432 residues: 5-hydroxybenzimidazole synthase BzaA (432 aa).

Substrate-binding positions include M95, Y124, H163, 185–187 (SYG), and 226–229 (DGMR). Zn(2+) is bound at residue H269. F292 provides a ligand contact to substrate. H333 serves as a coordination point for Zn(2+). Positions 409, 412, and 416 each coordinate [4Fe-4S] cluster.

The protein belongs to the ThiC family. 5-hydroxybenzimidazole synthase subfamily. [4Fe-4S] cluster is required as a cofactor.

It carries out the reaction 5-amino-1-(5-phospho-beta-D-ribosyl)imidazole + AH2 + S-adenosyl-L-methionine = 5-hydroxybenzimidazole + 5'-deoxyadenosine + formate + L-methionine + A + NH4(+) + phosphate + 2 H(+). Functionally, together with BzaB, probably catalyzes the conversion of aminoimidazole ribotide (AIR) to 5-hydroxybenzimidazole (5-HBI) in a radical S-adenosyl-L-methionine (SAM)-dependent reaction. Is thus involved in the anaerobic biosynthesis of the benzimidazole lower axial ligand of the cobamide produced by M.thermoacetica. Requires BzaB for catalytic activity, as BzaA alone displays no activity. The protein is 5-hydroxybenzimidazole synthase BzaA of Moorella thermoacetica (strain ATCC 39073 / JCM 9320).